The sequence spans 104 residues: Large ribosomal subunit protein uL24 (104 aa).

The protein belongs to the universal ribosomal protein uL24 family. As to quaternary structure, part of the 50S ribosomal subunit.

In terms of biological role, one of two assembly initiator proteins, it binds directly to the 5'-end of the 23S rRNA, where it nucleates assembly of the 50S subunit. Functionally, one of the proteins that surrounds the polypeptide exit tunnel on the outside of the subunit. The polypeptide is Large ribosomal subunit protein uL24 (Ectopseudomonas mendocina (strain ymp) (Pseudomonas mendocina)).